Consider the following 373-residue polypeptide: MVKFQIEKKTLLGRLGKIDTWGSVEVNHQTPSFQTYLRAGHIPHLTWEVAENQLKLEQTHIFQMTLPTLVSNAKIIEKFGKGAAKFCGMPAGAAVHLTPFDPLGKLPGGYNDSKSVAIWTANGKVSLDVKMWREIINSFGCGSIETLVDYDTPKDVGQKKLVKAVDRTKTFQEQLFQQDEKVNGERIVSLGGGFSKYHRRKCAVDVGLAENIAGYTVEFREFTEGKETDDKEMKELLEETFSPLPPTKLRCISGPFNPKTVLFLVQQGIDLFDSSFPVKLAEEGHAFCLSDDFPTSSKYEVVDFNNEKFADDFTALFDGCACYTCTKYTKGYLQHLLNTRELLASILLVIHNMTEYDKMFKLIRSSLENSEGL.

4 residues coordinate Zn(2+): Cys320, Cys322, Cys325, and His351.

Belongs to the queuine tRNA-ribosyltransferase family. QTRT2 subfamily. As to quaternary structure, heterodimer of a catalytic subunit and an accessory subunit. It depends on Zn(2+) as a cofactor.

The protein resides in the cytoplasm. Functionally, non-catalytic subunit of the queuine tRNA-ribosyltransferase (TGT) that catalyzes the base-exchange of a guanine (G) residue with queuine (Q) at position 34 (anticodon wobble position) in tRNAs with GU(N) anticodons (tRNA-Asp, -Asn, -His and -Tyr), resulting in the hypermodified nucleoside queuosine (7-(((4,5-cis-dihydroxy-2-cyclopenten-1-yl)amino)methyl)-7-deazaguanosine). This Caenorhabditis elegans protein is Queuine tRNA-ribosyltransferase accessory subunit 2.